Consider the following 158-residue polypeptide: MSRLTHIDERGAARMVDVSGKAETAREATAACHVTMRAETLALVTEGTAKKGDVLATARIAGIMAAKRTSELIPLCHPLAIAGVTLELEPDAALPGIRIAATVKTTGPTGVEMEALTAASVAALTVYDMLKAAEREMRIEGLRVIRKSGGKSGDFRQE.

Residues 75 to 77 (LCH) and 113 to 114 (ME) each bind substrate. Residue D128 is part of the active site.

Belongs to the MoaC family. In terms of assembly, homohexamer; trimer of dimers.

It catalyses the reaction (8S)-3',8-cyclo-7,8-dihydroguanosine 5'-triphosphate = cyclic pyranopterin phosphate + diphosphate. It functions in the pathway cofactor biosynthesis; molybdopterin biosynthesis. In terms of biological role, catalyzes the conversion of (8S)-3',8-cyclo-7,8-dihydroguanosine 5'-triphosphate to cyclic pyranopterin monophosphate (cPMP). The chain is Cyclic pyranopterin monophosphate synthase from Acidiphilium cryptum (strain JF-5).